A 217-amino-acid polypeptide reads, in one-letter code: Uracil-DNA glycosylase (217 aa).

Asp-62 serves as the catalytic Proton acceptor.

The protein belongs to the uracil-DNA glycosylase (UDG) superfamily. UNG family.

The protein resides in the cytoplasm. The catalysed reaction is Hydrolyzes single-stranded DNA or mismatched double-stranded DNA and polynucleotides, releasing free uracil.. In terms of biological role, excises uracil residues from the DNA which can arise as a result of misincorporation of dUMP residues by DNA polymerase or due to deamination of cytosine. The sequence is that of Uracil-DNA glycosylase from Streptococcus pneumoniae (strain JJA).